Consider the following 149-residue polypeptide: Large ribosomal subunit protein bL9 (149 aa).

It belongs to the bacterial ribosomal protein bL9 family.

Its function is as follows. Binds to the 23S rRNA. The chain is Large ribosomal subunit protein bL9 from Legionella pneumophila (strain Lens).